A 160-amino-acid chain; its full sequence is Cytosolic iron-sulfur assembly component 2A (160 aa).

Zn(2+) is bound by residues H89, H123, E150, and E153.

Belongs to the MIP18 family. As to quaternary structure, monomer and homodimer. Component of the CIA complex. Interacts with CIAO1. Interacts with IREB2. Interacts with APAF1.

It localises to the cytoplasm. Functionally, component of the cytosolic iron-sulfur protein assembly (CIA) complex, a multiprotein complex that mediates the incorporation of iron-sulfur cluster into extramitochondrial Fe/S proteins. As a CIA complex component and in collaboration with CIAO1 specifically matures ACO1 and stabilizes IREB2, connecting cytosolic iron-sulfur protein maturation with cellular iron regulation. May play a role in chromosome segregation through establishment of sister chromatid cohesion. May induce apoptosis in collaboration with APAF1. The protein is Cytosolic iron-sulfur assembly component 2A of Bos taurus (Bovine).